A 224-amino-acid chain; its full sequence is Pyridoxine/pyridoxamine 5'-phosphate oxidase (224 aa).

Substrate is bound by residues 14–17 (REHY) and K76. Residues 71-76 (RTVLMK), 86-87 (YT), R92, K93, and Q115 each bind FMN. 3 residues coordinate substrate: Y133, R137, and S141. Residues 150–151 (QS) and W196 each bind FMN. 202-204 (RLH) contributes to the substrate binding site. R206 lines the FMN pocket.

It belongs to the pyridoxamine 5'-phosphate oxidase family. In terms of assembly, homodimer. Requires FMN as cofactor.

It catalyses the reaction pyridoxamine 5'-phosphate + O2 + H2O = pyridoxal 5'-phosphate + H2O2 + NH4(+). It carries out the reaction pyridoxine 5'-phosphate + O2 = pyridoxal 5'-phosphate + H2O2. It functions in the pathway cofactor metabolism; pyridoxal 5'-phosphate salvage; pyridoxal 5'-phosphate from pyridoxamine 5'-phosphate: step 1/1. It participates in cofactor metabolism; pyridoxal 5'-phosphate salvage; pyridoxal 5'-phosphate from pyridoxine 5'-phosphate: step 1/1. Its function is as follows. Catalyzes the oxidation of either pyridoxine 5'-phosphate (PNP) or pyridoxamine 5'-phosphate (PMP) into pyridoxal 5'-phosphate (PLP). This is Pyridoxine/pyridoxamine 5'-phosphate oxidase from Streptomyces avermitilis (strain ATCC 31267 / DSM 46492 / JCM 5070 / NBRC 14893 / NCIMB 12804 / NRRL 8165 / MA-4680).